A 348-amino-acid chain; its full sequence is MTVRIAINGFGRIGRNVVRALYESGRRAEITVVAINELADAAGMAHLLKYDTSHGRFAWEVRHEREQLFVGDDVIRILHERTLADLPWRELGVDVVLDCTGVYGNREHGEAHIAAGAKKVLFSHPGSNGLDATVVFGVNQNELRAEHRIVSNASCTTNCIIPVIKLLDDAYGIESGTVTTIHSAMNDQQVIDAYHSDLRRTRAASQSIIPVDTKLAAGITRIFPQFNDRFEAIAVRVPTINVTAIDLSVTVKKPVKASEVNQLLQKAAQGAFHGIVDYTESPLVSIDFNHDPHSAIVDGTQTRVSGAHLIKTLVWCDNEWGFANRMLDTTLAMAAVGFRLDASASTKL.

Residues R12–I13 and R81 contribute to the NAD(+) site. Substrate is bound by residues S154 to T156, R200, T213 to K214, and R236. Catalysis depends on C155, which acts as the Nucleophile. N318 provides a ligand contact to NAD(+).

It belongs to the glyceraldehyde-3-phosphate dehydrogenase family. Epd subfamily. As to quaternary structure, homotetramer.

The protein resides in the cytoplasm. It catalyses the reaction D-erythrose 4-phosphate + NAD(+) + H2O = 4-phospho-D-erythronate + NADH + 2 H(+). It functions in the pathway cofactor biosynthesis; pyridoxine 5'-phosphate biosynthesis; pyridoxine 5'-phosphate from D-erythrose 4-phosphate: step 1/5. Its function is as follows. Catalyzes the NAD-dependent conversion of D-erythrose 4-phosphate to 4-phosphoerythronate. This is D-erythrose-4-phosphate dehydrogenase from Salmonella gallinarum (strain 287/91 / NCTC 13346).